We begin with the raw amino-acid sequence, 133 residues long: Large ribosomal subunit protein uL11 (133 aa).

This sequence belongs to the universal ribosomal protein uL11 family. As to quaternary structure, part of the ribosomal stalk of the 50S ribosomal subunit. Interacts with L10 and the large rRNA to form the base of the stalk. L10 forms an elongated spine to which 2 L12 dimers bind in a sequential fashion forming a pentameric L10(L12)2(L12)2 complex. One or more lysine residues are methylated.

In terms of biological role, forms part of the ribosomal stalk which helps the ribosome interact with GTP-bound translation factors. The protein is Large ribosomal subunit protein uL11 of Geobacillus stearothermophilus (Bacillus stearothermophilus).